A 185-amino-acid chain; its full sequence is Orotate phosphoribosyltransferase (185 aa).

5-phospho-alpha-D-ribose 1-diphosphate contacts are provided by residues Arg-102, Lys-103, Lys-106, His-108, and 128–136 (DDVITTGGS). Residues Thr-132 and Arg-160 each coordinate orotate.

This sequence belongs to the purine/pyrimidine phosphoribosyltransferase family. PyrE subfamily. Homodimer. Mg(2+) serves as cofactor.

It carries out the reaction orotidine 5'-phosphate + diphosphate = orotate + 5-phospho-alpha-D-ribose 1-diphosphate. Its pathway is pyrimidine metabolism; UMP biosynthesis via de novo pathway; UMP from orotate: step 1/2. Catalyzes the transfer of a ribosyl phosphate group from 5-phosphoribose 1-diphosphate to orotate, leading to the formation of orotidine monophosphate (OMP). This is Orotate phosphoribosyltransferase from Leptospira biflexa serovar Patoc (strain Patoc 1 / Ames).